Consider the following 213-residue polypeptide: Virulence factor 1 (213 aa).

The protein resides in the host mitochondrion. Functionally, plays a role in antagonizing the host innate immune response. The sequence is that of Virulence factor 1 from Norovirus (isolate Mouse/NoV/United States/MNV1/2002/GV) (MNV-1).